Consider the following 291-residue polypeptide: Undecaprenyl-diphosphatase (291 aa).

The next 8 membrane-spanning stretches (helical) occupy residues 1–21 (MLIL…LTEF), 48–68 (SAFT…AWVF), 99–119 (LHII…DDVI), 123–143 (LFSV…MIIA), 159–179 (INYF…WPGF), 200–220 (SDFT…LSLV), 236–256 (LGFL…LYLI), and 269–289 (IVLV…QGIT).

Belongs to the UppP family.

The protein resides in the cell membrane. The enzyme catalyses di-trans,octa-cis-undecaprenyl diphosphate + H2O = di-trans,octa-cis-undecaprenyl phosphate + phosphate + H(+). In terms of biological role, catalyzes the dephosphorylation of undecaprenyl diphosphate (UPP). Confers resistance to bacitracin. This is Undecaprenyl-diphosphatase from Staphylococcus saprophyticus subsp. saprophyticus (strain ATCC 15305 / DSM 20229 / NCIMB 8711 / NCTC 7292 / S-41).